A 75-amino-acid polypeptide reads, in one-letter code: Putative membrane protein insertion efficiency factor (75 aa).

This sequence belongs to the UPF0161 family.

The protein resides in the cell membrane. In terms of biological role, could be involved in insertion of integral membrane proteins into the membrane. This is Putative membrane protein insertion efficiency factor from Halalkalibacterium halodurans (strain ATCC BAA-125 / DSM 18197 / FERM 7344 / JCM 9153 / C-125) (Bacillus halodurans).